Consider the following 165-residue polypeptide: Cyclic pyranopterin monophosphate synthase (165 aa).

Residues 83-85 (FCH) and 120-121 (ME) contribute to the substrate site. Residue Asp135 is part of the active site.

The protein belongs to the MoaC family. As to quaternary structure, homohexamer; trimer of dimers.

It carries out the reaction (8S)-3',8-cyclo-7,8-dihydroguanosine 5'-triphosphate = cyclic pyranopterin phosphate + diphosphate. It functions in the pathway cofactor biosynthesis; molybdopterin biosynthesis. Its function is as follows. Catalyzes the conversion of (8S)-3',8-cyclo-7,8-dihydroguanosine 5'-triphosphate to cyclic pyranopterin monophosphate (cPMP). The chain is Cyclic pyranopterin monophosphate synthase from Xanthomonas axonopodis pv. citri (strain 306).